The following is a 160-amino-acid chain: Large ribosomal subunit protein eL29 (160 aa).

Basic residues predominate over residues 1 to 26 (MAKSKNHTTHNQSRKWHRNGIKKPRS). 2 disordered regions span residues 1-34 (MAKS…SLKG) and 115-160 (RLCQ…VKAP). K5 is subject to N6-methyllysine. At S31 the chain carries Phosphoserine. Residue K33 is modified to N6-acetyllysine. The segment covering 126–160 (KAGAKAPAKAQASAPAQAPKGAQAPKGAQAPVKAP) has biased composition (low complexity). Tandem repeats lie at residues 127–134 (AGAKAPAK) and 135–142 (AQASAPAQ). The segment at 127-142 (AGAKAPAKAQASAPAQ) is 2 X 8 AA tandem repeats of A-X-A-K-A-P-A-[KQ]. Residue S138 is modified to Phosphoserine. An N6-acetyllysine modification is found at K145.

Belongs to the eukaryotic ribosomal protein eL29 family. Component of the large ribosomal subunit.

Its subcellular location is the cytoplasm. Functionally, component of the large ribosomal subunit. The ribosome is a large ribonucleoprotein complex responsible for the synthesis of proteins in the cell. This chain is Large ribosomal subunit protein eL29 (Rpl29), found in Mus musculus (Mouse).